Reading from the N-terminus, the 198-residue chain is Peptidyl-tRNA hydrolase (198 aa).

Position 16 (tyrosine 16) interacts with tRNA. Histidine 21 acts as the Proton acceptor in catalysis. The tRNA site is built by phenylalanine 67, asparagine 69, and asparagine 115.

It belongs to the PTH family. In terms of assembly, monomer.

It is found in the cytoplasm. The enzyme catalyses an N-acyl-L-alpha-aminoacyl-tRNA + H2O = an N-acyl-L-amino acid + a tRNA + H(+). Hydrolyzes ribosome-free peptidyl-tRNAs (with 1 or more amino acids incorporated), which drop off the ribosome during protein synthesis, or as a result of ribosome stalling. In terms of biological role, catalyzes the release of premature peptidyl moieties from peptidyl-tRNA molecules trapped in stalled 50S ribosomal subunits, and thus maintains levels of free tRNAs and 50S ribosomes. This chain is Peptidyl-tRNA hydrolase, found in Prochlorococcus marinus (strain MIT 9301).